The primary structure comprises 265 residues: Mlc titration factor A (265 aa).

Residues histidine 111, histidine 148, histidine 152, and glutamate 211 each contribute to the Zn(2+) site.

Belongs to the MtfA family. Interacts with Mlc. Zn(2+) serves as cofactor.

It localises to the cytoplasm. Functionally, involved in the modulation of the activity of the glucose-phosphotransferase system (glucose-PTS). Interacts with the transcriptional repressor Mlc, preventing its interaction with DNA and leading to the modulation of expression of genes regulated by Mlc, including ptsG, which encodes the PTS system glucose-specific EIICB component. In terms of biological role, shows zinc-dependent metallopeptidase activity. The protein is Mlc titration factor A of Escherichia coli O7:K1 (strain IAI39 / ExPEC).